A 418-amino-acid polypeptide reads, in one-letter code: Serine hydroxymethyltransferase (418 aa).

(6S)-5,6,7,8-tetrahydrofolate-binding positions include Leu-121 and 125-127; that span reads GHL. Lys-230 carries the post-translational modification N6-(pyridoxal phosphate)lysine. 356–358 is a binding site for (6S)-5,6,7,8-tetrahydrofolate; that stretch reads SPF.

Belongs to the SHMT family. In terms of assembly, homodimer. Pyridoxal 5'-phosphate serves as cofactor.

Its subcellular location is the cytoplasm. The enzyme catalyses (6R)-5,10-methylene-5,6,7,8-tetrahydrofolate + glycine + H2O = (6S)-5,6,7,8-tetrahydrofolate + L-serine. The protein operates within one-carbon metabolism; tetrahydrofolate interconversion. Its pathway is amino-acid biosynthesis; glycine biosynthesis; glycine from L-serine: step 1/1. Its function is as follows. Catalyzes the reversible interconversion of serine and glycine with tetrahydrofolate (THF) serving as the one-carbon carrier. This reaction serves as the major source of one-carbon groups required for the biosynthesis of purines, thymidylate, methionine, and other important biomolecules. Also exhibits THF-independent aldolase activity toward beta-hydroxyamino acids, producing glycine and aldehydes, via a retro-aldol mechanism. The chain is Serine hydroxymethyltransferase from Pseudoalteromonas atlantica (strain T6c / ATCC BAA-1087).